We begin with the raw amino-acid sequence, 268 residues long: Small ribosomal subunit protein uS2 (268 aa).

The protein belongs to the universal ribosomal protein uS2 family.

This Coprothermobacter proteolyticus (strain ATCC 35245 / DSM 5265 / OCM 4 / BT) protein is Small ribosomal subunit protein uS2.